Reading from the N-terminus, the 170-residue chain is Tubulin polymerization-promoting protein family member 2 (170 aa).

The interval 127–147 is disordered; the sequence is TGTHKERFDESGKGKGIAGRE. The span at 129 to 139 shows a compositional bias: basic and acidic residues; sequence THKERFDESGK.

Belongs to the TPPP family.

It localises to the cytoplasm. It is found in the cytosol. Its subcellular location is the cell projection. The protein resides in the cilium. The protein localises to the flagellum. Probable regulator of microtubule dynamics required for sperm motility. In contrast to other members of the family, has no microtubule bundling activity. The chain is Tubulin polymerization-promoting protein family member 2 (TPPP2) from Macaca fascicularis (Crab-eating macaque).